The sequence spans 498 residues: Calcium-dependent protein kinase 22 (498 aa).

Gly-2 is lipidated: N-myristoyl glycine. Residues 36 to 305 (YSFGDELGKG…AADVLEHPWM (270 aa)) form the Protein kinase domain. Residues 42–50 (LGKGNFGTT) and Lys-65 each bind ATP. Asp-164 (proton acceptor) is an active-site residue. The residue at position 204 (Ser-204) is a Phosphoserine. Residues 309 to 339 (APDKPIDNVVLSRMKQFRAMNKLKKLALKVI) form an autoinhibitory domain region. EF-hand domains follow at residues 346-381 (EEIK…HGSK), 382-417 (LSET…RHRL), 418-453 (ERDE…HGMG), and 454-488 (DEAN…GILQ). 20 residues coordinate Ca(2+): Asp-359, Asp-361, Ser-363, Ser-365, Glu-370, Asp-395, Asp-397, Asn-399, Thr-401, Glu-406, Asp-431, Asp-433, Ser-435, His-437, Glu-442, Asp-466, Asn-468, Asp-470, Lys-472, and Glu-477.

This sequence belongs to the protein kinase superfamily. Ser/Thr protein kinase family. CDPK subfamily.

Its subcellular location is the membrane. It catalyses the reaction L-seryl-[protein] + ATP = O-phospho-L-seryl-[protein] + ADP + H(+). The enzyme catalyses L-threonyl-[protein] + ATP = O-phospho-L-threonyl-[protein] + ADP + H(+). Its activity is regulated as follows. Activated by calcium. Autophosphorylation may play an important role in the regulation of the kinase activity. Functionally, may play a role in signal transduction pathways that involve calcium as a second messenger. The protein is Calcium-dependent protein kinase 22 (CPK22) of Arabidopsis thaliana (Mouse-ear cress).